The primary structure comprises 188 residues: ATP synthase subunit b (188 aa).

Residues leucine 24 to phenylalanine 44 traverse the membrane as a helical segment.

This sequence belongs to the ATPase B chain family. F-type ATPases have 2 components, F(1) - the catalytic core - and F(0) - the membrane proton channel. F(1) has five subunits: alpha(3), beta(3), gamma(1), delta(1), epsilon(1). F(0) has three main subunits: a(1), b(2) and c(10-14). The alpha and beta chains form an alternating ring which encloses part of the gamma chain. F(1) is attached to F(0) by a central stalk formed by the gamma and epsilon chains, while a peripheral stalk is formed by the delta and b chains.

It is found in the cell membrane. Its function is as follows. F(1)F(0) ATP synthase produces ATP from ADP in the presence of a proton or sodium gradient. F-type ATPases consist of two structural domains, F(1) containing the extramembraneous catalytic core and F(0) containing the membrane proton channel, linked together by a central stalk and a peripheral stalk. During catalysis, ATP synthesis in the catalytic domain of F(1) is coupled via a rotary mechanism of the central stalk subunits to proton translocation. In terms of biological role, component of the F(0) channel, it forms part of the peripheral stalk, linking F(1) to F(0). This is ATP synthase subunit b from Corynebacterium diphtheriae (strain ATCC 700971 / NCTC 13129 / Biotype gravis).